The chain runs to 843 residues: DNA helicase MCM8 (843 aa).

Positions 1-23 (MSQGWRGGWSGGRGGNPYAGGWR) are enriched in gly residues. A disordered region spans residues 1 to 52 (MSQGWRGGWSGGRGGNPYAGGWRGRPWRGRGQGGSWSRNSGRDPVCFSTAPP). The MCM domain occupies 394-601 (LFQLIVNSLC…DHDHLLSEHV (208 aa)). An ATP-binding site is contributed by 446–453 (GDPGLGKS).

It belongs to the MCM family. Component of the MCM8-MCM9 complex, which forms a hexamer composed of mcm8 and mcm9.

The protein localises to the nucleus. The catalysed reaction is ATP + H2O = ADP + phosphate + H(+). Its function is as follows. Component of the MCM8-MCM9 complex, a complex involved in homologous recombination repair following DNA interstrand cross-links and plays a key role during gametogenesis. The MCM8-MCM9 complex probably acts as a hexameric helicase required to process aberrant forks into homologous recombination substrates and to orchestrate homologous recombination with resection, fork stabilization and fork restart. In eggs, required for elongation during DNA replication by facilitating the recruitment of rpa2/rpa34 and stimulating the processivity of DNA polymerases at replication foci. Probably not required for DNA replication in other cells. This is DNA helicase MCM8 (mcm8) from Xenopus tropicalis (Western clawed frog).